The primary structure comprises 138 residues: Large ribosomal subunit protein bL17 (138 aa).

The protein belongs to the bacterial ribosomal protein bL17 family. Part of the 50S ribosomal subunit. Contacts protein L32.

The sequence is that of Large ribosomal subunit protein bL17 from Methylorubrum extorquens (strain PA1) (Methylobacterium extorquens).